Consider the following 120-residue polypeptide: UPF0344 protein LMHCC_0278 (120 aa).

A run of 4 helical transmembrane segments spans residues 3–23 (GYIH…ALLI), 33–53 (MLQM…IMMV), 62–82 (ILAI…EMLL), and 92–112 (GMFL…GFYL).

Belongs to the UPF0344 family.

Its subcellular location is the cell membrane. This Listeria monocytogenes serotype 4a (strain HCC23) protein is UPF0344 protein LMHCC_0278.